Reading from the N-terminus, the 347-residue chain is Magnesium-protoporphyrin IX monomethyl ester [oxidative] cyclase (347 aa).

This sequence belongs to the AcsF family. The cofactor is Fe cation.

It catalyses the reaction Mg-protoporphyrin IX 13-monomethyl ester + 3 NADPH + 3 O2 + 2 H(+) = 3,8-divinyl protochlorophyllide a + 3 NADP(+) + 5 H2O. The protein operates within porphyrin-containing compound metabolism; chlorophyll biosynthesis (light-independent). Catalyzes the formation of the isocyclic ring in chlorophyll biosynthesis. Mediates the cyclase reaction, which results in the formation of divinylprotochlorophyllide (Pchlide) characteristic of all chlorophylls from magnesium-protoporphyrin IX 13-monomethyl ester (MgPMME). This is Magnesium-protoporphyrin IX monomethyl ester [oxidative] cyclase from Prochlorococcus marinus (strain SARG / CCMP1375 / SS120).